The sequence spans 255 residues: Cytochrome c oxidase subunit 3 (255 aa).

7 helical membrane-spanning segments follow: residues 12–29 (INII…STGL), 57–77 (LKYL…INGI), 91–111 (IFGM…WGFF), 126–146 (LEAF…ISLI), 155–175 (YFEV…FLSF), 196–216 (FNVL…FALM), and 235–255 (GMYW…LFLL).

This sequence belongs to the cytochrome c oxidase subunit 3 family. Component of the cytochrome c oxidase (complex IV, CIV), a multisubunit enzyme composed of a catalytic core of 3 subunits and several supernumerary subunits. The complex exists as a monomer or a dimer and forms supercomplexes (SCs) in the inner mitochondrial membrane with ubiquinol-cytochrome c oxidoreductase (cytochrome b-c1 complex, complex III, CIII).

The protein localises to the mitochondrion inner membrane. It catalyses the reaction 4 Fe(II)-[cytochrome c] + O2 + 8 H(+)(in) = 4 Fe(III)-[cytochrome c] + 2 H2O + 4 H(+)(out). Functionally, component of the cytochrome c oxidase, the last enzyme in the mitochondrial electron transport chain which drives oxidative phosphorylation. The respiratory chain contains 3 multisubunit complexes succinate dehydrogenase (complex II, CII), ubiquinol-cytochrome c oxidoreductase (cytochrome b-c1 complex, complex III, CIII) and cytochrome c oxidase (complex IV, CIV), that cooperate to transfer electrons derived from NADH and succinate to molecular oxygen, creating an electrochemical gradient over the inner membrane that drives transmembrane transport and the ATP synthase. Cytochrome c oxidase is the component of the respiratory chain that catalyzes the reduction of oxygen to water. Electrons originating from reduced cytochrome c in the intermembrane space (IMS) are transferred via the dinuclear copper A center (CU(A)) of subunit 2 and heme A of subunit 1 to the active site in subunit 1, a binuclear center (BNC) formed by heme A3 and copper B (CU(B)). The BNC reduces molecular oxygen to 2 water molecules using 4 electrons from cytochrome c in the IMS and 4 protons from the mitochondrial matrix. The polypeptide is Cytochrome c oxidase subunit 3 (MT-CO3) (Theileria annulata).